Consider the following 514-residue polypeptide: L-threonine dehydratase biosynthetic IlvA (514 aa).

At Lys62 the chain carries N6-(pyridoxal phosphate)lysine. Residues Asn89, 188-192 (GGGGL), and Ser315 each bind pyridoxal 5'-phosphate. ACT-like domains are found at residues 339–411 (ALLA…DLSD) and 434–504 (RLYS…DETN).

Belongs to the serine/threonine dehydratase family. In terms of assembly, homotetramer. Pyridoxal 5'-phosphate serves as cofactor.

The catalysed reaction is L-threonine = 2-oxobutanoate + NH4(+). The protein operates within amino-acid biosynthesis; L-isoleucine biosynthesis; 2-oxobutanoate from L-threonine: step 1/1. Its activity is regulated as follows. Isoleucine allosterically inhibits whereas valine allosterically activates this enzyme. Catalyzes the anaerobic formation of alpha-ketobutyrate and ammonia from threonine in a two-step reaction. The first step involved a dehydration of threonine and a production of enamine intermediates (aminocrotonate), which tautomerizes to its imine form (iminobutyrate). Both intermediates are unstable and short-lived. The second step is the nonenzymatic hydrolysis of the enamine/imine intermediates to form 2-ketobutyrate and free ammonia. In the low water environment of the cell, the second step is accelerated by RidA. This chain is L-threonine dehydratase biosynthetic IlvA (ilvA), found in Escherichia coli (strain K12).